Consider the following 505-residue polypeptide: 4-trimethylaminobutyraldehyde dehydrogenase (505 aa).

Residues K191 and 243-247 (GSVPT) each bind NAD(+). The active-site Proton acceptor is E265. C299 serves as the catalytic Nucleophile. Residue E402 coordinates NAD(+).

It belongs to the aldehyde dehydrogenase family. Homotetramer. As to expression, constitutively expressed in all organs tested: brain, eye, gill, GI, heart, liver, kidney, muscle, skin, testis and ovary.

Its subcellular location is the cytoplasm. The protein localises to the cytosol. It catalyses the reaction 4-(trimethylamino)butanal + NAD(+) + H2O = 4-(trimethylamino)butanoate + NADH + 2 H(+). It carries out the reaction an aldehyde + NAD(+) + H2O = a carboxylate + NADH + 2 H(+). The protein operates within amine and polyamine biosynthesis; carnitine biosynthesis. Functionally, converts gamma-trimethylaminobutyraldehyde into gamma-butyrobetaine with high efficiency (in vitro). Can catalyze the irreversible oxidation of a broad range of aldehydes to the corresponding acids in an NAD-dependent reaction, but with low efficiency. This chain is 4-trimethylaminobutyraldehyde dehydrogenase (aldh9A1), found in Oryzias latipes (Japanese rice fish).